Reading from the N-terminus, the 87-residue chain is Small ribosomal subunit protein bS20 (87 aa).

It belongs to the bacterial ribosomal protein bS20 family.

Binds directly to 16S ribosomal RNA. The polypeptide is Small ribosomal subunit protein bS20 (Clostridium beijerinckii (strain ATCC 51743 / NCIMB 8052) (Clostridium acetobutylicum)).